Consider the following 518-residue polypeptide: Cytochrome P450 monooxygenase psoD (518 aa).

Cys442 serves as a coordination point for heme.

This sequence belongs to the cytochrome P450 family. Requires heme as cofactor.

It functions in the pathway secondary metabolite biosynthesis. In terms of biological role, cytochrome P450 monooxygenase; part of the gene cluster that mediates the biosynthesis of pseurotin A, a competitive inhibitor of chitin synthase and an inducer of nerve-cell proliferation. The PKS-NRPS hybrid synthetase psoA is responsible for the biosynthesis of azaspirene, one of the first intermediates having the 1-oxa-7-azaspiro[4,4]-non-2-ene-4,6-dione core of pseurotin, via condensation of one acetyl-CoA, 4 malonyl-CoA, and a L-phenylalanine molecule. The dual-functional monooxygenase/methyltransferase psoF seems to be involved in the addition of the C3 methyl group onto the pseurotin scaffold. Azaspirene is then converted to synerazol through 4 steps including oxidation of C17 by the cytochrome P450 monooxygenase psoD, O-methylation of the hydroxy group of C8 by the methyltransferase psoC, and the trans-to-cis isomerization of the C13 olefin by the glutathione S-transferase psoE. The fourth step of synerazol production is performed by the dual-functional monooxygenase/methyltransferase psoF which seems to catalyze the epoxidation of the intermediate deepoxy-synerazol. Synerazol can be attacked by a water molecule nonenzymatically at two different positions to yield two diol products, pseurotin A and pseurotin D. The chain is Cytochrome P450 monooxygenase psoD from Aspergillus fumigatus (strain ATCC MYA-4609 / CBS 101355 / FGSC A1100 / Af293) (Neosartorya fumigata).